The primary structure comprises 1382 residues: Hepatocyte growth factor receptor (1382 aa).

The first 24 residues, 1 to 24 (MKASAVLAPGILVILFTLVQKSNC), serve as a signal peptide directing secretion. Topologically, residues 25–933 (ECKEALVKSK…VIVQPDQNIT (909 aa)) are extracellular. The region spanning 27 to 516 (KEALVKSKMN…TGKKITKIPL (490 aa)) is the Sema domain. The N-linked (GlcNAc...) asparagine glycan is linked to asparagine 45. 4 disulfide bridges follow: cysteine 95-cysteine 101, cysteine 98-cysteine 160, cysteine 133-cysteine 141, and cysteine 173-cysteine 176. Asparagine 106 carries an N-linked (GlcNAc...) asparagine glycan. N-linked (GlcNAc...) asparagine glycosylation is found at asparagine 203 and asparagine 359. 2 cysteine pairs are disulfide-bonded: cysteine 299–cysteine 364 and cysteine 386–cysteine 398. Asparagine 400 and asparagine 406 each carry an N-linked (GlcNAc...) asparagine glycan. 4 cysteine pairs are disulfide-bonded: cysteine 521–cysteine 539, cysteine 527–cysteine 562, cysteine 530–cysteine 546, and cysteine 542–cysteine 552. 3 consecutive IPT/TIG domains span residues 564-656 (PTIY…FSYV), 658-740 (PIIT…FSYQ), and 743-837 (PIIY…LIYV). Threonine 583 carries an O-linked (Man) threonine glycan. Asparagine 608 and asparagine 636 each carry an N-linked (GlcNAc...) asparagine glycan. O-linked (Man) threonine glycans are attached at residues threonine 677 and threonine 762. N-linked (GlcNAc...) asparagine glycosylation is found at asparagine 786, asparagine 880, and asparagine 931. A helical transmembrane segment spans residues 934-956 (EFIVGILSISGILLTLLGLLLWW). Residues 957 to 1382 (KKKKQIKDLG…QDNFDSEGNT (426 aa)) lie on the Cytoplasmic side of the membrane. Residue serine 967 is modified to Phosphoserine. A Phosphothreonine modification is found at threonine 978. A phosphoserine mark is found at serine 991, serine 998, and serine 1001. Phosphotyrosine is present on tyrosine 1004. Residues 1079-1346 (VHFNEVIGRG…RISAIFSTFI (268 aa)) form the Protein kinase domain. ATP contacts are provided by residues 1085–1093 (IGRGHFGCV) and lysine 1111. Aspartate 1205 acts as the Proton acceptor in catalysis. Positions 1213–1382 (LDENFTVKVA…QDNFDSEGNT (170 aa)) are interaction with RANBP9. Tyrosine 1231 bears the Phosphotyrosine mark. 2 positions are modified to phosphotyrosine; by autocatalysis: tyrosine 1235 and tyrosine 1236. Threonine 1290 is subject to Phosphothreonine. An interaction with MUC20 region spans residues 1321 to 1360 (WHPKAELRPSFSELVSRISAIFSTFIGEHYVHVNATYVNI). Phosphotyrosine; by autocatalysis is present on residues tyrosine 1350 and tyrosine 1357. A Phosphotyrosine modification is found at tyrosine 1366.

It belongs to the protein kinase superfamily. Tyr protein kinase family. Heterodimer made of an alpha chain (50 kDa) and a beta chain (145 kDa) which are disulfide linked. Binds PLXNB1. Interacts when phosphorylated with downstream effectors including STAT3, PIK3R1, SRC, PCLG1, GRB2 and GAB1. Interacts with SPSB1, SPSB2 and SPSB4. Interacts with INPP5D/SHIP1. When phosphorylated at Tyr-1357, interacts with INPPL1/SHIP2. Interacts with RANBP9 and RANBP10, as well as SPSB1, SPSB2, SPSB3 and SPSB4. SPSB1 binding occurs in the presence and in the absence of HGF, however HGF treatment has a positive effect on this interaction. Interacts with MUC20; prevents interaction with GRB2 and suppresses hepatocyte growth factor-induced cell proliferation. Interacts with GRB10. Interacts with PTPN1 and PTPN2. Interacts with tensin TNS3. Interacts (when phosphorylated) with tensin TNS4 (via SH2 domain); the interaction increases MET protein stability by inhibiting MET endocytosis and subsequent lysosomal degradation. Autophosphorylated in response to ligand binding on Tyr-1235 and Tyr-1236 in the kinase domain leading to further phosphorylation of Tyr-1350 and Tyr-1357 in the C-terminal multifunctional docking site. Dephosphorylated by PTPRJ at Tyr-1350 and Tyr-1366. Dephosphorylated by PTPN1 and PTPN2. In terms of processing, ubiquitinated. Ubiquitination by CBL regulates the receptor stability and activity through proteasomal degradation. Post-translationally, O-mannosylation of IPT/TIG domains by TMEM260 is required for protein maturation. O-mannosylated residues are composed of single mannose glycans that are not elongated or modified.

The protein resides in the membrane. It catalyses the reaction L-tyrosyl-[protein] + ATP = O-phospho-L-tyrosyl-[protein] + ADP + H(+). In its inactive state, the C-terminal tail interacts with the catalytic domain and inhibits the kinase activity. Upon ligand binding, the C-terminal tail is displaced and becomes phosphorylated, thus increasing the kinase activity. Functionally, receptor tyrosine kinase that transduces signals from the extracellular matrix into the cytoplasm by binding to hepatocyte growth factor/HGF ligand. Regulates many physiological processes including proliferation, scattering, morphogenesis and survival. Ligand binding at the cell surface induces autophosphorylation of MET on its intracellular domain that provides docking sites for downstream signaling molecules. Following activation by ligand, interacts with the PI3-kinase subunit PIK3R1, PLCG1, SRC, GRB2, STAT3 or the adapter GAB1. Recruitment of these downstream effectors by MET leads to the activation of several signaling cascades including the RAS-ERK, PI3 kinase-AKT, or PLCgamma-PKC. The RAS-ERK activation is associated with the morphogenetic effects while PI3K/AKT coordinates prosurvival effects. During embryonic development, MET signaling plays a role in gastrulation, development and migration of muscles and neuronal precursors, angiogenesis and kidney formation. In adults, participates in wound healing as well as organ regeneration and tissue remodeling. Also promotes differentiation and proliferation of hematopoietic cells. The polypeptide is Hepatocyte growth factor receptor (MET) (Atelerix albiventris (Middle-African hedgehog)).